The sequence spans 328 residues: Phosphate acyltransferase (328 aa).

It belongs to the PlsX family. As to quaternary structure, homodimer. Probably interacts with PlsY.

It localises to the cytoplasm. It carries out the reaction a fatty acyl-[ACP] + phosphate = an acyl phosphate + holo-[ACP]. It functions in the pathway lipid metabolism; phospholipid metabolism. Functionally, catalyzes the reversible formation of acyl-phosphate (acyl-PO(4)) from acyl-[acyl-carrier-protein] (acyl-ACP). This enzyme utilizes acyl-ACP as fatty acyl donor, but not acyl-CoA. The protein is Phosphate acyltransferase of Staphylococcus saprophyticus subsp. saprophyticus (strain ATCC 15305 / DSM 20229 / NCIMB 8711 / NCTC 7292 / S-41).